Consider the following 235-residue polypeptide: Sugar fermentation stimulation protein homolog (235 aa).

It belongs to the SfsA family.

This Aliivibrio salmonicida (strain LFI1238) (Vibrio salmonicida (strain LFI1238)) protein is Sugar fermentation stimulation protein homolog.